The sequence spans 1100 residues: SLIT-ROBO Rho GTPase-activating protein 2 (1100 aa).

Residues 19-324 (TQVKEIRAQL…AAENLEANSD (306 aa)) enclose the F-BAR domain. Coiled-coil stretches lie at residues 170–201 (YNMD…HEEK) and 363–400 (GELI…IQDM). Residues 181–203 (LKEAEKQEEKQMSRSVRHEEKQT) show a composition bias toward basic and acidic residues. The tract at residues 181-210 (LKEAEKQEEKQMSRSVRHEEKQTPRSPDSL) is disordered. In terms of domain architecture, Rho-GAP spans 496–680 (VRKQEAIQII…TIIIHHESIF (185 aa)). Residues 738 to 797 (SDPIEAIARFDYSGRTNRELSFKKGASLLLYSRASDDWWEGRHNGTEGLVPHQYIVVQDM) form the SH3 domain. 2 disordered regions span residues 800 to 835 (GYAG…TGGH) and 852 to 938 (EATS…PLDP). Residues 807-823 (PKADLEGSHDSVEEKVS) are compositionally biased toward basic and acidic residues. The span at 919 to 932 (RKSTPTGRSKSFSN) shows a compositional bias: polar residues. A coiled-coil region spans residues 945-972 (EHSSQDIEATMNTALSELRELERQSNVK). The disordered stretch occupies residues 986 to 1100 (KSGGTSEPSS…PPPTDKSCPV (115 aa)). 2 stretches are compositionally biased toward polar residues: residues 987–997 (SGGTSEPSSPL) and 1008–1049 (SQHP…GSTF). The span at 1067 to 1081 (SSSAGGSPAMGSPTT) shows a compositional bias: low complexity. Positions 1082 to 1094 (TIPPTPPPPPPPT) are enriched in pro residues.

The protein resides in the cell membrane. It localises to the cell projection. It is found in the dendritic spine. Its subcellular location is the postsynaptic density. The protein localises to the postsynaptic cell membrane. The protein resides in the lamellipodium. It localises to the cytoplasmic vesicle. It is found in the phagosome. Its subcellular location is the nucleus. The protein localises to the cytoplasm. The protein resides in the cytosol. In terms of biological role, postsynaptic RAC1 GTPase activating protein (GAP) that plays a key role in neuronal morphogenesis and migration mainly during development of the cerebral cortex. Regulates excitatory and inhibitory synapse maturation and density in cortical pyramidal neurons. Mechanistically, acts by binding and deforming membranes, thereby regulating actin dynamics to regulate cell migration and differentiation. In Danio rerio (Zebrafish), this protein is SLIT-ROBO Rho GTPase-activating protein 2 (srgap2).